A 186-amino-acid polypeptide reads, in one-letter code: Tegument protein UL55 (186 aa).

This sequence belongs to the alphaherpesvirinae HHV-1 UL55 family.

The protein resides in the virion tegument. It is found in the host nucleus matrix. This chain is Tegument protein UL55, found in Human herpesvirus 2 (strain HG52) (HHV-2).